The following is a 309-amino-acid chain: Protease HtpX homolog (309 aa).

The next 2 helical transmembrane spans lie at 7 to 27 (FILLAGLTALFVGAGYMIGGP) and 28 to 48 (TGMLVALVLAVGMNLFSYWNA). His-134 is a Zn(2+) binding site. The active site involves Glu-135. Residue His-138 participates in Zn(2+) binding. Helical transmembrane passes span 149 to 169 (VTATIAGAISALANFAFFFGG) and 177 to 197 (PGGLVGTIALAILAPIAAMLV). Glu-206 serves as a coordination point for Zn(2+). Positions 289–309 (TRGRSGTAVPTGATGKSGPWG) are disordered.

The protein belongs to the peptidase M48B family. The cofactor is Zn(2+).

It localises to the cell inner membrane. This is Protease HtpX homolog from Caulobacter sp. (strain K31).